The chain runs to 447 residues: UDP-N-acetylmuramate--L-alanine ligase (447 aa).

108-114 (GSHGKTS) serves as a coordination point for ATP.

It belongs to the MurCDEF family.

It localises to the cytoplasm. It catalyses the reaction UDP-N-acetyl-alpha-D-muramate + L-alanine + ATP = UDP-N-acetyl-alpha-D-muramoyl-L-alanine + ADP + phosphate + H(+). Its pathway is cell wall biogenesis; peptidoglycan biosynthesis. In terms of biological role, cell wall formation. The protein is UDP-N-acetylmuramate--L-alanine ligase of Listeria welshimeri serovar 6b (strain ATCC 35897 / DSM 20650 / CCUG 15529 / CIP 8149 / NCTC 11857 / SLCC 5334 / V8).